Here is a 278-residue protein sequence, read N- to C-terminus: TIMELESS-interacting protein (278 aa).

The segment at 1 to 59 is disordered; that stretch reads MLEQEENGLFEIPDYEHVEDETFPPFPPPASPERDPADAEPEEGSGSGVPVPPKRTVKR. The interval 64–140 is interaction with TIMELESS; that stretch reads LDATRLTSER…KEVQTCLKRI (77 aa). Disordered regions lie at residues 155 to 197 and 216 to 278; these read NDEV…EEQQ and LSNS…TNLD. A phosphoserine mark is found at Ser-191 and Ser-219. Acidic residues predominate over residues 226–239; that stretch reads VTVEENSTGEDQEE. Thr-233 is modified (phosphothreonine). Residues 259-278 are compositionally biased toward basic and acidic residues; sequence THEEEQCKAEETQLDHTNLD.

Belongs to the CSM3 family. In terms of assembly, interacts with MCM6 and MCM7. Interacts with TIMELESS (via N-terminus), which impairs TIMELESS self-association. Interacts with RPA2 and PRDX2. Expressed in brain.

The protein localises to the cytoplasm. Its subcellular location is the nucleus. In terms of biological role, plays an important role in the control of DNA replication and the maintenance of replication fork stability. Important for cell survival after DNA damage or replication stress. May be specifically required for the ATR-CHEK1 pathway in the replication checkpoint induced by hydroxyurea or ultraviolet light. Forms a complex with TIMELESS and this complex regulates DNA replication processes under both normal and stress conditions, stabilizes replication forks and influences both CHEK1 phosphorylation and the intra-S phase checkpoint in response to genotoxic stress. The chain is TIMELESS-interacting protein (Tipin) from Mus musculus (Mouse).